A 60-amino-acid chain; its full sequence is Toxin S4C8 (60 aa).

Intrachain disulfides connect C3–C22, C17–C39, C41–C52, and C53–C58. The segment at 41-48 is important for binding to L-type calcium channels; the sequence is CPTAMWPY.

Belongs to the three-finger toxin family. Short-chain subfamily. L-type calcium blocker sub-subfamily. As to expression, expressed by the venom gland.

The protein resides in the secreted. Its function is as follows. This specific blocker of the L-type calcium channel (Cav1/CACNA1) is a smooth muscle relaxant and an inhibitor of cardiac contractions. In Dendroaspis jamesoni kaimosae (Eastern Jameson's mamba), this protein is Toxin S4C8.